The primary structure comprises 358 residues: Alanine racemase (358 aa).

Catalysis depends on lysine 35, which acts as the Proton acceptor; specific for D-alanine. Lysine 35 is subject to N6-(pyridoxal phosphate)lysine. Substrate is bound at residue arginine 130. The active-site Proton acceptor; specific for L-alanine is the tyrosine 255. Methionine 303 contacts substrate.

Belongs to the alanine racemase family. Pyridoxal 5'-phosphate serves as cofactor.

It carries out the reaction L-alanine = D-alanine. It functions in the pathway amino-acid biosynthesis; D-alanine biosynthesis; D-alanine from L-alanine: step 1/1. Catalyzes the interconversion of L-alanine and D-alanine. May also act on other amino acids. The protein is Alanine racemase (alr) of Shewanella woodyi (strain ATCC 51908 / MS32).